The following is a 237-amino-acid chain: Ribosomal RNA small subunit methyltransferase G (237 aa).

Residues Gly78, Phe83, 129–130 (AE), and Arg148 contribute to the S-adenosyl-L-methionine site.

The protein belongs to the methyltransferase superfamily. RNA methyltransferase RsmG family.

Its subcellular location is the cytoplasm. In terms of biological role, specifically methylates the N7 position of a guanine in 16S rRNA. The polypeptide is Ribosomal RNA small subunit methyltransferase G (Streptococcus thermophilus (strain CNRZ 1066)).